We begin with the raw amino-acid sequence, 726 residues long: MTEIDRSRAFAKDVKRIVVKVGTAVVTGKGGRLALGRLGAICEQLAELNSDGFEVILVSSGAVGLGRQRLRYRQLVNSSFADLQKPQMELDGKACAGVGQSSLMAYYETMFDQLDVTVAQMLVTDSSFRDKDFRKQLSETVKAMLRMRVIPVFNENDAISTRRAPYKDSTGIFWDNDSLAALLSLELKADLLILLSDVEGLYTGPPSDSTSKLIHTFIKEKHQDEITFGEKSKLGRGGMTAKVKAAVNAAYGGVPVIITSGYAAENISKVLRGLRVGTLFHQDAHLWAPVVDTTSRDMAVAARESSRKLQALSSEDRKQILHDIANALEVNEKTIKAENDLDVAAAQEAGYEESLVARLVMKPGKISSLAASVRQLAEMEDPIGRVLKKTQVADDLILEKTSSPIGVLLIVFESRPDALVQIASLAIRSGNGLLLKGGKEARRSNAILHKVITDAIPETVGGKLIGLVTSREEIPDLLKLDDVIDLVIPRGSNKLVSQIKNSTKIPVLGHADGICHVYVDKSGKLDMAKRIVSDAKLDYPAACNAMETLLVHKDLEQNGFLDDLIYVLQTKGVTLYGGPRASAKLNIPETKSFHHEYSSKACTVEIVEDVYGAIDHIHQHGSAHTDCIVTEDSEVAEIFLRQVDSAAVFHNASTRFSDGFRFGLGAEVGISTSRIHARGPVGVEGLLTTRWIMRGKGQVVDGDNGIVYTHKDLPVLQRTEAVENGI.

A glutamate 5-kinase region spans residues 1-296; the sequence is MTEIDRSRAF…WAPVVDTTSR (296 aa). Positions 60, 157, and 176 each coordinate substrate. ATP-binding positions include 196–197 and 236–242; these read SD and RGGMTAK. Residues 297–717 are gamma-glutamyl phosphate reductase; that stretch reads DMAVAARESS…YTHKDLPVLQ (421 aa).

It in the N-terminal section; belongs to the glutamate 5-kinase family. This sequence in the C-terminal section; belongs to the gamma-glutamyl phosphate reductase family.

It carries out the reaction L-glutamate + ATP = L-glutamyl 5-phosphate + ADP. The catalysed reaction is L-glutamate 5-semialdehyde + phosphate + NADP(+) = L-glutamyl 5-phosphate + NADPH + H(+). It functions in the pathway amino-acid biosynthesis; L-proline biosynthesis; L-glutamate 5-semialdehyde from L-glutamate: step 1/2. It participates in amino-acid biosynthesis; L-proline biosynthesis; L-glutamate 5-semialdehyde from L-glutamate: step 2/2. Functionally, P5CS plays a key role in proline biosynthesis, leading to osmoregulation in plants. The sequence is that of Delta-1-pyrroline-5-carboxylate synthase B (P5CSB) from Arabidopsis thaliana (Mouse-ear cress).